The following is a 324-amino-acid chain: Putative exosome complex exonuclease RRP42 (324 aa).

It belongs to the RNase PH family. In terms of assembly, component of the RNA exosome complex.

The protein localises to the nucleus. The protein resides in the nucleolus. It is found in the cytoplasm. Functionally, non-catalytic component of the RNA exosome complex which has 3'-&gt;5' exoribonuclease activity and participates in a multitude of cellular RNA processing and degradation events. The sequence is that of Putative exosome complex exonuclease RRP42 (exosc7) from Dictyostelium discoideum (Social amoeba).